Here is a 255-residue protein sequence, read N- to C-terminus: Thiazole synthase (255 aa).

The active-site Schiff-base intermediate with DXP is Lys-96. 1-deoxy-D-xylulose 5-phosphate contacts are provided by residues Gly-157, 183 to 184 (AG), and 205 to 206 (NT).

The protein belongs to the ThiG family. In terms of assembly, homotetramer. Forms heterodimers with either ThiH or ThiS.

Its subcellular location is the cytoplasm. It catalyses the reaction [ThiS sulfur-carrier protein]-C-terminal-Gly-aminoethanethioate + 2-iminoacetate + 1-deoxy-D-xylulose 5-phosphate = [ThiS sulfur-carrier protein]-C-terminal Gly-Gly + 2-[(2R,5Z)-2-carboxy-4-methylthiazol-5(2H)-ylidene]ethyl phosphate + 2 H2O + H(+). It participates in cofactor biosynthesis; thiamine diphosphate biosynthesis. Catalyzes the rearrangement of 1-deoxy-D-xylulose 5-phosphate (DXP) to produce the thiazole phosphate moiety of thiamine. Sulfur is provided by the thiocarboxylate moiety of the carrier protein ThiS. In vitro, sulfur can be provided by H(2)S. The protein is Thiazole synthase of Staphylococcus epidermidis (strain ATCC 12228 / FDA PCI 1200).